The primary structure comprises 193 residues: Auxin-responsive protein IAA23 (193 aa).

Polar residues predominate over residues 1–12; the sequence is MSTSSGADSSPP. Positions 1-66 are disordered; that stretch reads MSTSSGADSS…SPKARAVGWP (66 aa). A compositionally biased stretch (low complexity) spans 21-36; that stretch reads TALTLALPGSSSSSSS. An EAR-like (transcriptional repression) motif is present at residues 23-27; that stretch reads LTLAL. Residues 39 to 53 are compositionally biased toward basic and acidic residues; sequence DPERKRAAHADHADA. Positions 83-191 constitute a PB1 domain; it reads AKLVKVAVDG…EAVNLSPRRS (109 aa).

It belongs to the Aux/IAA family. As to quaternary structure, homodimers and heterodimers. Highly expressed in roots. Expressed in seedlings.

It localises to the nucleus. Aux/IAA proteins are short-lived transcriptional factors that function as repressors of early auxin response genes at low auxin concentrations. In Oryza sativa subsp. japonica (Rice), this protein is Auxin-responsive protein IAA23 (IAA23).